A 75-amino-acid chain; its full sequence is Defensin-like protein 58 (75 aa).

An N-terminal signal peptide occupies residues 1-23 (MNITKRYVVIFFLVMLTKSLSNS). 4 cysteine pairs are disulfide-bonded: C39/C73, C43/C66, C52/C71, and C56/C72.

Belongs to the DEFL family.

The protein localises to the secreted. The chain is Defensin-like protein 58 from Arabidopsis thaliana (Mouse-ear cress).